A 91-amino-acid chain; its full sequence is Probable Fe(2+)-trafficking protein (91 aa).

This sequence belongs to the Fe(2+)-trafficking protein family.

Functionally, could be a mediator in iron transactions between iron acquisition and iron-requiring processes, such as synthesis and/or repair of Fe-S clusters in biosynthetic enzymes. The sequence is that of Probable Fe(2+)-trafficking protein from Paraburkholderia phymatum (strain DSM 17167 / CIP 108236 / LMG 21445 / STM815) (Burkholderia phymatum).